We begin with the raw amino-acid sequence, 143 residues long: Actin-depolymerizing factor (143 aa).

Positions 11-143 (GMGVADHSKN…DLEVLRERAH (133 aa)) constitute an ADF-H domain.

The protein belongs to the actin-binding proteins ADF family.

Its function is as follows. Actin-depolymerizing protein. Severs actin filaments (F-actin) and binds to actin monomers. This is Actin-depolymerizing factor from Vitis vinifera (Grape).